The primary structure comprises 429 residues: Glutamate-1-semialdehyde 2,1-aminomutase 2 (429 aa).

Position 268 is an N6-(pyridoxal phosphate)lysine (lysine 268).

This sequence belongs to the class-III pyridoxal-phosphate-dependent aminotransferase family. HemL subfamily. In terms of assembly, homodimer. Pyridoxal 5'-phosphate serves as cofactor.

The protein localises to the cytoplasm. The enzyme catalyses (S)-4-amino-5-oxopentanoate = 5-aminolevulinate. It participates in porphyrin-containing compound metabolism; protoporphyrin-IX biosynthesis; 5-aminolevulinate from L-glutamyl-tRNA(Glu): step 2/2. The chain is Glutamate-1-semialdehyde 2,1-aminomutase 2 from Bacillus cereus (strain B4264).